The chain runs to 220 residues: Metalloproteinase inhibitor 2 (220 aa).

Residues 1-26 (MGAAARSLRLALGLLLLATLPRPADA) form the signal peptide. C27 provides a ligand contact to Zn(2+). Involved in metalloproteinase-binding regions lie at residues 27–30 (CSCS) and 95–96 (SA). 6 disulfide bridges follow: C27/C98, C29/C127, C39/C152, C154/C201, C159/C164, and C172/C193. The region spanning 27–152 (CSCSPVHPQQ…SLNHRYQMGC (126 aa)) is the NTR domain.

This sequence belongs to the protease inhibitor I35 (TIMP) family. Interacts (via the C-terminal) with MMP2 (via the C-terminal PEX domain); the interaction inhibits the MMP2 activity. In terms of processing, the activity of TIMP2 is dependent on the presence of disulfide bonds.

It localises to the secreted. Complexes with metalloproteinases (such as collagenases) and irreversibly inactivates them by binding to their catalytic zinc cofactor. This chain is Metalloproteinase inhibitor 2 (TIMP2), found in Canis lupus familiaris (Dog).